Reading from the N-terminus, the 1216-residue chain is MAAMAPGGSGSGGGVNPFLSDSDEDDDEVAATEERRAVLRLGAGSGLDPGSAGSLSPQDPVALGSSARPGLPGEASAAAVALGGTGETPARLSIDAIAAQLLRDQYLLTALELHTELLESGRELPRLRDYFSNPGNFERQSGTPPGMGAPGVPGAAGVGGAGGREPSTASGGGQLNRAGSISTLDSLDFARYSDDGNRETDEKVAVLEFELRKAKETIQALRANLTKAAEHEVPLQERKNYKSSPEIQEPIKPLEKRALNFLVNEFLLKNNYKLTSITFSDENDDQDFELWDDVGLNIPKPPDLLQLYRDFGNHQVTGKDLVDVASGVEEDELEALTPIISNLPPTLETPQPAENSMLVQKLEDKISLLNSEKWSLMEQIRRLKSEMDFLKNEHFAIPAVCDSVQPPLDQLPHKDSEDSGQHPDVNSSDKGKNTDIHLSISDEADSTIPKENSPNSFPRREREGMPPSSLSSKKTVHFDKPNRKLSPAFHQALLSFCRMSADSRLGYEVSRIADSEKSVMLMLGRCLPHIVPNVLLAKREELIPLILCTACLHPEPKERDQLLHILFNLIKRPDDEQRQMILTGCVAFARHVGPTRVEAELLPQCWEQINHKYPERRLLVAESCGALAPYLPKEIRSSLVLSMLQQMLMEDKADLVREAVIKSLGIIMGYIDDPDKYHQGFELLLSALGDPSERVVSATHQVFLPAYAAWTTELGNLQSHLILTLLNKIEKLLREGEHGLDEHKLHMYLSALQSLIPSLFALVLQNAPFSSKAKLHGEVPQIEVTRFPRPMSPLQDVSTIIGSREQLAVLLQLYDYQLEQEGTTGWESLLWVVNQLLPQLIEIVGKINVTSTACVHEFSRFFWRLCRTFGKIFTNTKVKPQFQEILRLSEENIDSSAGNGVLTKATVPIYATGVLTCYIQEEDRKLLVGFLEDVMTLLSLSHAPLDSLKASFVELGANPAYHELLLTVLWYGVVHTSALVRCTAARMFELTLRGMSEALVDKRVAPALVTLSSDPEFSVRIATIPAFGTIMETVIQRELLERVKMQLASFLEDPQYQDQHSLHTEIIKTFGRVGPNAEPRFRDEFVIPHLHKLALVNNLQIVDSKRLDIATHLFEAYSALSCCFISEDLMVNHFLPGLRCLRTDMEHLSPEHEVILSSMIKECEQKVENKTVQEPQGSMSIAASLVSEDTKTKFLNKMGQLTTSGAMLANVFQRKK.

2 disordered regions span residues 1–73 and 135–177; these read MAAM…GLPG and GNFE…QLNR. N-acetylalanine is present on Ala2. Phosphoserine is present on residues Ser20 and Ser22. The segment covering 21-31 has biased composition (acidic residues); the sequence is DSDEDDDEVAA. Position 32 is a phosphothreonine (Thr32). A phosphoserine mark is found at Ser54 and Ser56. A compositionally biased stretch (gly residues) spans 148–163; that stretch reads GAPGVPGAAGVGGAGG. Ser180 and Ser182 each carry phosphoserine. Residue Thr183 is modified to Phosphothreonine. Residue Ser186 is modified to Phosphoserine. A coiled-coil region spans residues 197–231; the sequence is NRETDEKVAVLEFELRKAKETIQALRANLTKAAEH. The 33-residue stretch at 255–287 folds into the LisH domain; sequence EKRALNFLVNEFLLKNNYKLTSITFSDENDDQD. The stretch at 359 to 397 forms a coiled coil; the sequence is VQKLEDKISLLNSEKWSLMEQIRRLKSEMDFLKNEHFAI. Ser385 carries the post-translational modification Phosphoserine. Positions 401 to 477 are disordered; that stretch reads CDSVQPPLDQ…SSLSSKKTVH (77 aa). Residues 411-435 show a composition bias toward basic and acidic residues; the sequence is LPHKDSEDSGQHPDVNSSDKGKNTD. The residue at position 453 (Ser453) is a Phosphoserine. An interaction with RAB11A and RAB11B region spans residues 497-779; that stretch reads CRMSADSRLG…SSKAKLHGEV (283 aa). 2 HEAT repeats span residues 601–639 and 640–679; these read LLPQ…RSSL and VLSM…KYHQ. Ser792 is subject to Phosphoserine. The HEAT 3 repeat unit spans residues 1004-1042; the sequence is VAPALVTLSSDPEFSVRIATIPAFGTIMETVIQRELLER. The residue at position 1149 (Ser1149) is a Phosphoserine.

It is found in the recycling endosome. It localises to the golgi apparatus. Its subcellular location is the trans-Golgi network. In terms of biological role, regulates intracellular cholesterol distribution from recycling endosomes to the trans-Golgi network through interactions with RAB11 and OSBP. Functions in membrane tethering and promotes OSBP-mediated cholesterol transfer between RAB11-bound recycling endosomes and OSBP-bound Golgi-like membranes. The protein is RAB11-binding protein RELCH of Homo sapiens (Human).